Reading from the N-terminus, the 413-residue chain is CinA-like protein (413 aa).

This sequence belongs to the CinA family.

This Geobacter metallireducens (strain ATCC 53774 / DSM 7210 / GS-15) protein is CinA-like protein.